A 188-amino-acid chain; its full sequence is Dual specificity protein phosphatase 18 (188 aa).

Residues 19–160 form the Tyrosine-protein phosphatase domain; that stretch reads GLSQITKSLY…LIHYEFQLFG (142 aa). Catalysis depends on Cys104, which acts as the Phosphocysteine intermediate.

The protein belongs to the protein-tyrosine phosphatase family. Non-receptor class dual specificity subfamily. As to expression, widely expressed with highest levels in liver, brain, ovary and testis.

The protein resides in the cytoplasm. It is found in the nucleus. It localises to the mitochondrion inner membrane. The enzyme catalyses O-phospho-L-tyrosyl-[protein] + H2O = L-tyrosyl-[protein] + phosphate. The catalysed reaction is O-phospho-L-seryl-[protein] + H2O = L-seryl-[protein] + phosphate. It catalyses the reaction O-phospho-L-threonyl-[protein] + H2O = L-threonyl-[protein] + phosphate. Activated by manganese ions, inhibited by iodoacetic acid. Its function is as follows. Can dephosphorylate single and diphosphorylated synthetic MAPK peptides, with preference for the phosphotyrosine and diphosphorylated forms over phosphothreonine. In vitro, dephosphorylates p-nitrophenyl phosphate (pNPP). In Homo sapiens (Human), this protein is Dual specificity protein phosphatase 18 (DUSP18).